Reading from the N-terminus, the 151-residue chain is Putative pre-16S rRNA nuclease (151 aa).

The protein belongs to the YqgF nuclease family.

It localises to the cytoplasm. In terms of biological role, could be a nuclease involved in processing of the 5'-end of pre-16S rRNA. This chain is Putative pre-16S rRNA nuclease, found in Prochlorococcus marinus (strain MIT 9515).